The following is a 233-amino-acid chain: UPF0280 protein AF_0649 (233 aa).

This sequence belongs to the UPF0280 family.

This is UPF0280 protein AF_0649 from Archaeoglobus fulgidus (strain ATCC 49558 / DSM 4304 / JCM 9628 / NBRC 100126 / VC-16).